The following is a 218-amino-acid chain: Small ribosomal subunit protein uS3c (218 aa).

Positions 47–118 (VQKNIRISSG…KLNIAITRIS (72 aa)) constitute a KH type-2 domain.

The protein belongs to the universal ribosomal protein uS3 family. In terms of assembly, part of the 30S ribosomal subunit.

Its subcellular location is the plastid. It localises to the chloroplast. The sequence is that of Small ribosomal subunit protein uS3c (rps3) from Arabis hirsuta (Hairy rock-cress).